Here is a 788-residue protein sequence, read N- to C-terminus: 5-methyltetrahydropteroyltriglutamate--homocysteine methyltransferase (788 aa).

Residues 24-27 (RELK) and K140 contribute to the 5-methyltetrahydropteroyltri-L-glutamate site. Residues 463 to 465 (IGS) and E516 contribute to the L-homocysteine site. L-methionine contacts are provided by residues 463–465 (IGS) and E516. 5-methyltetrahydropteroyltri-L-glutamate contacts are provided by residues 547–548 (RC) and W593. D631 contributes to the L-homocysteine binding site. D631 lines the L-methionine pocket. E637 contributes to the 5-methyltetrahydropteroyltri-L-glutamate binding site. Residues H673, C675, and E697 each contribute to the Zn(2+) site. Catalysis depends on H726, which acts as the Proton donor. Residue C758 participates in Zn(2+) binding.

The protein belongs to the vitamin-B12 independent methionine synthase family. The cofactor is Zn(2+).

The catalysed reaction is 5-methyltetrahydropteroyltri-L-glutamate + L-homocysteine = tetrahydropteroyltri-L-glutamate + L-methionine. It participates in amino-acid biosynthesis; L-methionine biosynthesis via de novo pathway; L-methionine from L-homocysteine (MetE route): step 1/1. Its function is as follows. Catalyzes the transfer of a methyl group from 5-methyltetrahydrofolate to homocysteine resulting in methionine formation. In Rhodopseudomonas palustris (strain ATCC BAA-98 / CGA009), this protein is 5-methyltetrahydropteroyltriglutamate--homocysteine methyltransferase.